The following is an 834-amino-acid chain: Ras GTPase-activating protein 3 (834 aa).

2 consecutive C2 domains span residues 1–112 (MAVE…DTWF) and 123–263 (VQGK…EAWY). Ala2 bears the N-acetylalanine mark. The residue at position 66 (Tyr66) is a Phosphotyrosine. Ser77 carries the phosphoserine modification. Thr110 is modified (phosphothreonine). Positions 346 to 561 (GRVVPFISAI…DAVKNFLDLI (216 aa)) constitute a Ras-GAP domain. Residues 576-677 (ILLKEGFMIK…WIDILTKVSQ (102 aa)) enclose the PH domain. The Btk-type zinc-finger motif lies at 679-715 (NQKRLAVYHPSAYLNGHWLCCRASSDTAAGCSPCTGG). 4 residues coordinate Zn(2+): His687, Cys698, Cys699, and Cys709. Residues 806–834 (KYGSQEHPIGDKSFQSYIRQQSETPAHSM) form a disordered region. Phosphoserine occurs at positions 809 and 833. Residues 818–834 (SFQSYIRQQSETPAHSM) show a composition bias toward polar residues.

In terms of biological role, inhibitory regulator of the Ras-cyclic AMP pathway. May bind inositol tetrakisphosphate (IP4). The protein is Ras GTPase-activating protein 3 (RASA3) of Bos taurus (Bovine).